The sequence spans 996 residues: Low-density lipoprotein receptor-related protein 8 (996 aa).

The N-terminal stretch at 1–28 (MGRPELGALRPLALLLLLLLQLQHLSAA) is a signal peptide. Residues 29–858 (DPLPGGQGPV…GSQMGSTVTA (830 aa)) are Extracellular-facing. LDL-receptor class A domains follow at residues 40-76 (ECEE…DDCP), 79-117 (TCAD…ATCS), 120-158 (ECPA…AGCP), 160-196 (LCAP…RGCS), 199-238 (ACPP…ELCG), 250-287 (ACAP…ADCS), 290-326 (PCRE…AGCL), and 330-369 (TCEG…KVCG). Cystine bridges form between C41/C53, C48/C66, C60/C75, C80/C92, C87/C105, C99/C116, C121/C135, C128/C148, C142/C157, C161/C173, C168/C186, C180/C195, C200/C213, C207/C226, C220/C237, C251/C264, C259/C277, C271/C286, C291/C303, C298/C316, C310/C325, C331/C344, C339/C357, C351/C368, C373/C384, C380/C393, C395/C407, C413/C423, C419/C432, and C434/C447. W58, D61, D63, D65, D71, and E72 together coordinate Ca(2+). A glycan (N-linked (GlcNAc...) asparagine) is linked at N170. The region spanning 364–408 (PQKVCGLNECLHNNGGCSHICTDLKIGFECTCPAGFQLLDQKTCG) is the EGF-like 1 domain. The region spanning 409–448 (DIDECQDPDACSQICVNYKGYFKCECHPGYEMDTLTKNCK) is the EGF-like 2; calcium-binding domain. 5 LDL-receptor class B repeats span residues 495-541 (NRIY…DWVH), 542-584 (KHIY…DPLR), 585-628 (GFMY…DLLS), 629-671 (QRLY…AVFE), and 672-714 (DKVF…FHEL). Residue N551 is glycosylated (N-linked (GlcNAc...) asparagine). Positions 773–831 (STSTTTLASAMTRTVPATTRAPGTTIHDPTYQNHSTETPSQTAAAPHSVNVPRAPSTSP) are clustered O-linked oligosaccharides. Residues 778–851 (TLASAMTRTV…SQHYGNEGSQ (74 aa)) are disordered. Positions 802–815 (TYQNHSTETPSQTA) are enriched in polar residues. N805 carries an N-linked (GlcNAc...) asparagine glycan. Residues 824 to 839 (PRAPSTSPSTPSPATS) show a composition bias toward low complexity. N840 carries N-linked (GlcNAc...) asparagine glycosylation. Over residues 840–851 (NHSQHYGNEGSQ) the composition is skewed to polar residues. The chain crosses the membrane as a helical span at residues 859–881 (AVIGVIVPIVVIALLCMSGYLIW). The Cytoplasmic segment spans residues 882 to 996 (RNWKRKNTKS…ALSLEDDGLP (115 aa)).

Belongs to the LDLR family. In terms of assembly, homooligomer. Interacts with VLDLR. Reelin associates with two or more receptor molecules. Interacts with DAB1 and JNK-interacting proteins. Interacts with SNX17. Interacts with PCSK9. Interacts with MDK; this interaction is calcium dependent. Interacts with CLU. In terms of processing, O-glycosylated. Some alternatively spliced isoforms lack the O-linked sugar domain. Post-translationally, undergoes sequential, furin and gamma-secretase dependent, proteolytic processing, resulting in the extracellular release of the entire ligand-binding domain as a soluble polypeptide and in the intracellular domain (ICD) release into the cytoplasm. The gamma-secretase-dependent proteolytical processing occurs after the bulk of the extracellular domain has been shed, in a furin-dependent manner, in alternatively spliced isoforms carrying the furin cleavage site. Hypoglycosylation (mainly hypo-O-glycosylation) leads to increased extracellular cleavage, which in turn results in accelerating release of the intracellular domain (ICD) by the gamma-secretase. The resulting receptor fragment is able to inhibit Reelin signaling and in particular the Reelin-induced DAB1 phosphorylation. Tyrosine phosphorylated upon apoE binding. In terms of processing, ubiquitinated by MYLIP leading to degradation. In terms of tissue distribution, expressed in neurons throughout the brain, with strong expression in pyramidal neurons of the hippocampus, granule cells of the dentate gyrus, cortical neurons and Purkinje cells of the cerebellum. Also expressed in the epithelium of the choroid plexus and of the blood vessels (apical expression), as well as in the epididymis.

It localises to the cell membrane. The protein localises to the secreted. Functionally, cell surface receptor for Reelin (RELN) and apolipoprotein E (apoE)-containing ligands. LRP8 participates in transmitting the extracellular Reelin signal to intracellular signaling processes, by binding to DAB1 on its cytoplasmic tail. Reelin acts via both the VLDL receptor (VLDLR) and LRP8 to regulate DAB1 tyrosine phosphorylation and microtubule function in neurons. LRP8 has higher affinity for Reelin than VLDLR. LRP8 is thus a key component of the Reelin pathway which governs neuronal layering of the forebrain during embryonic brain development. Binds the endoplasmic reticulum resident receptor-associated protein (RAP). Binds dimers of beta 2-glycoprotein I and may be involved in the suppression of platelet aggregation in the vasculature. Highly expressed in the initial segment of the epididymis, where it affects the functional expression of clusterin and phospholipid hydroperoxide glutathione peroxidase (PHGPx), two proteins required for sperm maturation. May also function as an endocytic receptor. Not required for endocytic uptake of SEPP1 in the kidney which is mediated by LRP2. Together with its ligand, apolipoprotein E (apoE), may indirectly play a role in the suppression of the innate immune response by controlling the survival of myeloid-derived suppressor cells. The chain is Low-density lipoprotein receptor-related protein 8 (Lrp8) from Mus musculus (Mouse).